A 133-amino-acid chain; its full sequence is Small ribosomal subunit protein uS8 (133 aa).

Belongs to the universal ribosomal protein uS8 family. As to quaternary structure, part of the 30S ribosomal subunit. Contacts proteins S5 and S12.

In terms of biological role, one of the primary rRNA binding proteins, it binds directly to 16S rRNA central domain where it helps coordinate assembly of the platform of the 30S subunit. The chain is Small ribosomal subunit protein uS8 from Acaryochloris marina (strain MBIC 11017).